Reading from the N-terminus, the 137-residue chain is Large ribosomal subunit protein uL22 (137 aa).

The protein belongs to the universal ribosomal protein uL22 family. As to quaternary structure, part of the 50S ribosomal subunit.

Functionally, this protein binds specifically to 23S rRNA; its binding is stimulated by other ribosomal proteins, e.g. L4, L17, and L20. It is important during the early stages of 50S assembly. It makes multiple contacts with different domains of the 23S rRNA in the assembled 50S subunit and ribosome. The globular domain of the protein is located near the polypeptide exit tunnel on the outside of the subunit, while an extended beta-hairpin is found that lines the wall of the exit tunnel in the center of the 70S ribosome. This Flavobacterium psychrophilum (strain ATCC 49511 / DSM 21280 / CIP 103535 / JIP02/86) protein is Large ribosomal subunit protein uL22.